The chain runs to 223 residues: Protein-L-isoaspartate O-methyltransferase (223 aa).

Residue S70 is part of the active site.

It belongs to the methyltransferase superfamily. L-isoaspartyl/D-aspartyl protein methyltransferase family.

The protein localises to the cytoplasm. It carries out the reaction [protein]-L-isoaspartate + S-adenosyl-L-methionine = [protein]-L-isoaspartate alpha-methyl ester + S-adenosyl-L-homocysteine. Its function is as follows. Catalyzes the methyl esterification of L-isoaspartyl residues in peptides and proteins that result from spontaneous decomposition of normal L-aspartyl and L-asparaginyl residues. It plays a role in the repair and/or degradation of damaged proteins. The protein is Protein-L-isoaspartate O-methyltransferase of Saccharophagus degradans (strain 2-40 / ATCC 43961 / DSM 17024).